Consider the following 319-residue polypeptide: HPr kinase/phosphorylase (319 aa).

Active-site residues include histidine 141 and lysine 162. 156–163 (GNSGVGKS) serves as a coordination point for ATP. Mg(2+) is bound at residue serine 163. Catalysis depends on aspartate 180, which acts as the Proton acceptor; for phosphorylation activity. Proton donor; for dephosphorylation activity. An important for the catalytic mechanism of both phosphorylation and dephosphorylation region spans residues 204–213 (MEIRGIGIID). Position 205 (glutamate 205) interacts with Mg(2+). Arginine 246 is a catalytic residue. The tract at residues 267–272 (PVKVGR) is important for the catalytic mechanism of dephosphorylation.

The protein belongs to the HPrK/P family. In terms of assembly, homohexamer. The cofactor is Mg(2+).

The enzyme catalyses [HPr protein]-L-serine + ATP = [HPr protein]-O-phospho-L-serine + ADP + H(+). The catalysed reaction is [HPr protein]-O-phospho-L-serine + phosphate + H(+) = [HPr protein]-L-serine + diphosphate. In terms of biological role, catalyzes the ATP- as well as the pyrophosphate-dependent phosphorylation of a specific serine residue in HPr, a phosphocarrier protein of the phosphoenolpyruvate-dependent sugar phosphotransferase system (PTS). HprK/P also catalyzes the pyrophosphate-producing, inorganic phosphate-dependent dephosphorylation (phosphorolysis) of seryl-phosphorylated HPr (P-Ser-HPr). The two antagonistic activities of HprK/P are regulated by several intracellular metabolites, which change their concentration in response to the absence or presence of rapidly metabolisable carbon sources (glucose, fructose, etc.) in the growth medium. Therefore, by controlling the phosphorylation state of HPr, HPrK/P is a sensor enzyme that plays a major role in the regulation of carbon metabolism and sugar transport: it mediates carbon catabolite repression (CCR), and regulates PTS-catalyzed carbohydrate uptake and inducer exclusion. In Lactobacillus gasseri (strain ATCC 33323 / DSM 20243 / BCRC 14619 / CIP 102991 / JCM 1131 / KCTC 3163 / NCIMB 11718 / NCTC 13722 / AM63), this protein is HPr kinase/phosphorylase.